The sequence spans 234 residues: Large ribosomal subunit protein uL1 (234 aa).

This sequence belongs to the universal ribosomal protein uL1 family. In terms of assembly, part of the 50S ribosomal subunit.

In terms of biological role, binds directly to 23S rRNA. The L1 stalk is quite mobile in the ribosome, and is involved in E site tRNA release. Its function is as follows. Protein L1 is also a translational repressor protein, it controls the translation of the L11 operon by binding to its mRNA. This is Large ribosomal subunit protein uL1 from Campylobacter fetus subsp. fetus (strain 82-40).